We begin with the raw amino-acid sequence, 266 residues long: Small ribosomal subunit protein eS1 (266 aa).

Residues 234 to 266 (EGGTGTATKATGDDTGAKVERADGYEPPIQETV) are disordered. The segment covering 244-257 (TGDDTGAKVERADG) has biased composition (basic and acidic residues).

This sequence belongs to the eukaryotic ribosomal protein eS1 family. Component of the small ribosomal subunit. Mature ribosomes consist of a small (40S) and a large (60S) subunit. The 40S subunit contains about 33 different proteins and 1 molecule of RNA (18S). The 60S subunit contains about 49 different proteins and 3 molecules of RNA (28S, 5.8S and 5S). Part of the small subunit (SSU) processome, composed of more than 70 proteins and the RNA chaperone small nucleolar RNA (snoRNA) U3.

It is found in the cytoplasm. The protein resides in the nucleus. The protein localises to the nucleolus. In terms of biological role, component of the small ribosomal subunit. The ribosome is a large ribonucleoprotein complex responsible for the synthesis of proteins in the cell. Part of the small subunit (SSU) processome, first precursor of the small eukaryotic ribosomal subunit. During the assembly of the SSU processome in the nucleolus, many ribosome biogenesis factors, an RNA chaperone and ribosomal proteins associate with the nascent pre-rRNA and work in concert to generate RNA folding, modifications, rearrangements and cleavage as well as targeted degradation of pre-ribosomal RNA by the RNA exosome. May play a role during erythropoiesis. In Solea senegalensis (Senegalese sole), this protein is Small ribosomal subunit protein eS1 (rps3a).